The chain runs to 274 residues: Protein CURLY FLAG LEAF 1 (274 aa).

The segment at 17–44 (SLNGGGGGGGGRRRGRRAAAAEGSDDSE) is disordered. Positions 47–52 (TVELNS) match the EAR motif. The region spanning 54 to 88 (VALPYHWEQCLDIRTGQVYYINWEDGTRTTIDPRS) is the WW domain. Disordered regions lie at residues 83 to 133 (TIDP…SGYT) and 175 to 216 (GRDG…SPTD). 3 stretches are compositionally biased toward low complexity: residues 87–106 (RSSS…SSSR), 121–133 (AAAA…SGYT), and 184–207 (SSSS…AVSS).

In terms of assembly, binds to HDG1.

Its function is as follows. Negatively regulates the cuticle development probably by interacting with the HD-ZIP IV transcription factor HDG1. This chain is Protein CURLY FLAG LEAF 1, found in Oryza sativa subsp. japonica (Rice).